Consider the following 98-residue polypeptide: U-scoloptoxin(16)-Er9a (98 aa).

An N-terminal signal peptide occupies residues 1–24 (MVSYLCMSVSSGWLSIGKIAIKDG).

The protein belongs to the scoloptoxin-16 family. Post-translationally, contains 4 disulfide bonds. In terms of tissue distribution, expressed by the venom gland.

The protein localises to the secreted. The chain is U-scoloptoxin(16)-Er9a from Ethmostigmus rubripes (Giant centipede).